The following is a 423-amino-acid chain: Glucose-1-phosphate adenylyltransferase (423 aa).

Alpha-D-glucose 1-phosphate contacts are provided by residues Tyr112, Gly177, 192 to 193, and Ser210; that span reads EK.

It belongs to the bacterial/plant glucose-1-phosphate adenylyltransferase family. Homotetramer.

The enzyme catalyses alpha-D-glucose 1-phosphate + ATP + H(+) = ADP-alpha-D-glucose + diphosphate. Its pathway is glycan biosynthesis; glycogen biosynthesis. In terms of biological role, involved in the biosynthesis of ADP-glucose, a building block required for the elongation reactions to produce glycogen. Catalyzes the reaction between ATP and alpha-D-glucose 1-phosphate (G1P) to produce pyrophosphate and ADP-Glc. The sequence is that of Glucose-1-phosphate adenylyltransferase from Rhodospirillum rubrum (strain ATCC 11170 / ATH 1.1.1 / DSM 467 / LMG 4362 / NCIMB 8255 / S1).